Here is a 528-residue protein sequence, read N- to C-terminus: tRNA-2-methylthio-N(6)-dimethylallyladenosine synthase (528 aa).

An MTTase N-terminal domain is found at 19–134; it reads RTYEVRTYGC…LPTLLERARH (116 aa). [4Fe-4S] cluster-binding residues include Cys-28, Cys-63, Cys-97, Cys-171, Cys-175, and Cys-178. The Radical SAM core domain occupies 157–387; that stretch reads RDEIASGWVS…TALQERISHE (231 aa). In terms of domain architecture, TRAM spans 390-460; it reads QRVVGRTVEV…PFHLIADSVD (71 aa).

This sequence belongs to the methylthiotransferase family. MiaB subfamily. As to quaternary structure, monomer. Requires [4Fe-4S] cluster as cofactor.

The protein resides in the cytoplasm. The catalysed reaction is N(6)-dimethylallyladenosine(37) in tRNA + (sulfur carrier)-SH + AH2 + 2 S-adenosyl-L-methionine = 2-methylsulfanyl-N(6)-dimethylallyladenosine(37) in tRNA + (sulfur carrier)-H + 5'-deoxyadenosine + L-methionine + A + S-adenosyl-L-homocysteine + 2 H(+). Its function is as follows. Catalyzes the methylthiolation of N6-(dimethylallyl)adenosine (i(6)A), leading to the formation of 2-methylthio-N6-(dimethylallyl)adenosine (ms(2)i(6)A) at position 37 in tRNAs that read codons beginning with uridine. The sequence is that of tRNA-2-methylthio-N(6)-dimethylallyladenosine synthase from Clavibacter michiganensis subsp. michiganensis (strain NCPPB 382).